The chain runs to 636 residues: Polyadenylate-binding protein 1 (636 aa).

An N-acetylmethionine modification is found at Met1. RRM domains follow at residues 11-89, 99-175, 191-268, and 294-370; these read ASLY…WSQR, GNIF…RFKS, TNVY…RAQK, and VNLY…LAQR. The segment at 166-289 is CSDE1-binding; that stretch reads RKVFVGRFKS…FEQMKQDRIT (124 aa). The residue at position 299 (Lys299) is an N6-methyllysine. A Phosphoserine modification is found at Ser315. At Thr319 the chain carries Phosphothreonine. An omega-N-methylarginine mark is found at Arg385, Arg419, Arg432, and Arg436. Residues Arg455 and Arg460 each carry the omega-N-methylated arginine; by CARM1 modification. Omega-N-methylarginine is present on residues Arg475 and Arg481. Arg493 carries the asymmetric dimethylarginine; alternate modification. Position 493 is a dimethylated arginine; alternate (Arg493). Position 493 is an omega-N-methylarginine; alternate (Arg493). An Omega-N-methylarginine modification is found at Arg506. Position 512 is an N6-acetyllysine (Lys512). At Arg518 the chain carries Omega-N-methylarginine. The region spanning 542 to 619 is the PABC domain; sequence QEPLTASMLA…AVAVLQAHQA (78 aa).

This sequence belongs to the polyadenylate-binding protein type-1 family. May form homodimers. Component of a multisubunit autoregulatory ribonucleoprotein complex (ARC), at least composed of IGF2BP1, PABPC1 and CSDE1. Directly interacts with IGF2BP1. Part of a complex associated with the FOS mCRD domain and consisting of HNRPD, SYNCRIP, PAIP1 and CSDE1/UNR. Interacts with PAIP1 and PAIP2 (via the PABPC1-interacting motifs PAM1 and PAM2). Interacts with PAIP1 with a 1:1 stoichiometry and with PAIP2 with a 1:2 stoichiometry. The interaction with CSDE1 is direct and RNA-independent. Found in a mRNP complex with YBX2. Interacts with TENT2/GLD2. Identified in the spliceosome C complex. Identified in a mRNP complex, at least composed of DHX9, DDX3X, ELAVL1, HNRNPU, IGF2BP1, ILF3, PABPC1, PCBP2, PTBP2, STAU1, STAU2, SYNCRIP and YBX1. The interaction with DDX3X is direct and RNA-independent. This interaction increases in stressed cells and decreases during cell recovery. Identified in a IGF2BP1-dependent mRNP granule complex containing untranslated mRNAs. Interacts with NXF1/TAP. Interacts with PIWIL1. Interacts with AGO1, AGO2, GSPT1 and GSPT2. Interacts with LARP4B. Interacts (via the second and third RRM domains and the C-terminus) with PAIP2B (via central acidic portion and C-terminus). Forms a complex with LARP1 and SHFL. Interacts with LARP4. Interacts with ZFC3H1 in a RNase-sensitive manner. Interacts with TRIM71 (via NHL repeats) in an RNA-dependent manner. Interacts with TENT5C; the interaction has no effect on TENT5C poly(A) polymerase function. Interacts with G3BP1 and G3BP2. Interacts with ENDOV; the interaction is RNA-dependent and stimulates ENDOV activity. Interacts with UPF1; the interaction is RNA-dependent. Interacts with IGF2BP2 and IGF2BP3. May interact with SETX. Interacts with RBM46. Interacts with PAN3. Phosphorylated by MAPKAPK2. In terms of processing, methylated by CARM1. Arg-493 is dimethylated, probably to asymmetric dimethylarginine.

The protein localises to the cytoplasm. Its subcellular location is the stress granule. The protein resides in the nucleus. It localises to the cell projection. It is found in the lamellipodium. Functionally, binds the poly(A) tail of mRNA, including that of its own transcript, and regulates processes of mRNA metabolism such as pre-mRNA splicing and mRNA stability. Its function in translational initiation regulation can either be enhanced by PAIP1 or repressed by PAIP2. Can probably bind to cytoplasmic RNA sequences other than poly(A) in vivo. Binds to N6-methyladenosine (m6A)-containing mRNAs and contributes to MYC stability by binding to m6A-containing MYC mRNAs. Involved in translationally coupled mRNA turnover. Implicated with other RNA-binding proteins in the cytoplasmic deadenylation/translational and decay interplay of the FOS mRNA mediated by the major coding-region determinant of instability (mCRD) domain. Involved in regulation of nonsense-mediated decay (NMD) of mRNAs containing premature stop codons; for the recognition of premature termination codons (PTC) and initiation of NMD a competitive interaction between UPF1 and PABPC1 with the ribosome-bound release factors is proposed. By binding to long poly(A) tails, may protect them from uridylation by ZCCHC6/ZCCHC11 and hence contribute to mRNA stability. The chain is Polyadenylate-binding protein 1 (PABPC1) from Bos taurus (Bovine).